Here is an 844-residue protein sequence, read N- to C-terminus: RING finger containing E3 ubiquitin-protein ligase WSV222 (844 aa).

229-236 (AEDDKGKT) contacts ATP. The RING-type; atypical zinc-finger motif lies at 308 to 359 (CGVCATSVEEDENEGKTTSLSWYQMNCKHYIHCECLMGMCAAAGNVQCPMCR).

In terms of assembly, interacts with host UBE2E1/UBCH6; this interaction results in WSV222 auto-ubiquitination. Interacts with host tumor suppressor-like protein.

It carries out the reaction S-ubiquitinyl-[E2 ubiquitin-conjugating enzyme]-L-cysteine + [acceptor protein]-L-lysine = [E2 ubiquitin-conjugating enzyme]-L-cysteine + N(6)-ubiquitinyl-[acceptor protein]-L-lysine.. It functions in the pathway protein modification; protein ubiquitination. In terms of biological role, probable E3 ubiquitin-protein ligase which accepts ubiquitin from the E2 ubiquitin-conjugating enzyme UBE2E1/UBCH6 in the form of a thioester and then directly transfers the ubiquitin to targeted substrates. Mediates ubiquitination of host tumor-suppressor-like protein (TSL) targeting it for degradation. Might function as an anti-apoptosis protein by counteracting TSL-induced apoptosis. The protein is RING finger containing E3 ubiquitin-protein ligase WSV222 of White spot syndrome virus (isolate Shrimp/China/Tongan/1996) (WSSV).